Here is an 859-residue protein sequence, read N- to C-terminus: Leucine--tRNA ligase (859 aa).

A 'HIGH' region motif is present at residues 42–52; that stretch reads PYPSGRLHMGH. Positions 618–622 match the 'KMSKS' region motif; sequence KMSKS. K621 lines the ATP pocket.

Belongs to the class-I aminoacyl-tRNA synthetase family.

Its subcellular location is the cytoplasm. It catalyses the reaction tRNA(Leu) + L-leucine + ATP = L-leucyl-tRNA(Leu) + AMP + diphosphate. In Shewanella sp. (strain MR-7), this protein is Leucine--tRNA ligase.